Reading from the N-terminus, the 285-residue chain is Acetylglutamate kinase (285 aa).

Substrate is bound by residues 63 to 64 (GG), R85, and N178.

It belongs to the acetylglutamate kinase family. ArgB subfamily.

It localises to the cytoplasm. The enzyme catalyses N-acetyl-L-glutamate + ATP = N-acetyl-L-glutamyl 5-phosphate + ADP. The protein operates within amino-acid biosynthesis; L-arginine biosynthesis; N(2)-acetyl-L-ornithine from L-glutamate: step 2/4. Its function is as follows. Catalyzes the ATP-dependent phosphorylation of N-acetyl-L-glutamate. The chain is Acetylglutamate kinase from Synechococcus sp. (strain CC9311).